We begin with the raw amino-acid sequence, 75 residues long: Small ribosomal subunit protein bS18 (75 aa).

Belongs to the bacterial ribosomal protein bS18 family. In terms of assembly, part of the 30S ribosomal subunit. Forms a tight heterodimer with protein bS6.

Its function is as follows. Binds as a heterodimer with protein bS6 to the central domain of the 16S rRNA, where it helps stabilize the platform of the 30S subunit. This Yersinia enterocolitica serotype O:8 / biotype 1B (strain NCTC 13174 / 8081) protein is Small ribosomal subunit protein bS18.